The following is a 198-amino-acid chain: Superoxide dismutase [Fe] (198 aa).

H27, H74, D158, and H162 together coordinate Fe cation.

The protein belongs to the iron/manganese superoxide dismutase family. In terms of assembly, homodimer. Requires Fe cation as cofactor.

Its subcellular location is the cytoplasm. The enzyme catalyses 2 superoxide + 2 H(+) = H2O2 + O2. In terms of biological role, destroys superoxide anion radicals which are normally produced within the cells and which are toxic to biological systems. In Plasmodium falciparum (isolate 3D7), this protein is Superoxide dismutase [Fe] (SODB).